Reading from the N-terminus, the 1007-residue chain is Protocadherin alpha-C2 (1007 aa).

The signal sequence occupies residues 1 to 42 (MEQAGTRPAATEHPRLRRPMPWLLLLPLLLLLLLLLPGPAAS). Cadherin domains follow at residues 43–148 (QLRY…SPRF), 149–257 (PRPN…SPAF), 258–365 (DQST…APEV), 374–469 (VPEN…PPSF), and 470–579 (LEDS…APHI). The Extracellular portion of the chain corresponds to 43–708 (QLRYSVPEEQ…RTYSEITLYL (666 aa)). N280 and N436 each carry an N-linked (GlcNAc...) asparagine glycan. N586 and N657 each carry an N-linked (GlcNAc...) asparagine glycan. The 98-residue stretch at 594–691 (GPRTAPAGYL…DRVSKILPDT (98 aa)) folds into the Cadherin 6 domain. The helical transmembrane segment at 709 to 729 (IIALSTVSFIFLLTIIILSII) threads the bilayer. At 730–1007 (KCYRYTAYGT…GNSTTDNSDQ (278 aa)) the chain is on the cytoplasmic side. 4 PXXP repeats span residues 856-859 (PRQP), 889-892 (PGGP), 930-933 (PGNP), and 948-951 (PGSP). The segment at 856–951 (PRQPNPDWRY…PDKFIIPGSP (96 aa)) is 4 X 4 AA repeats of P-X-X-P. The tract at residues 885-1007 (LRAGPGGPDQ…GNSTTDNSDQ (123 aa)) is disordered. The span at 966-980 (DKSDFITFGKKEETK) shows a compositional bias: basic and acidic residues.

The protein localises to the cell membrane. In terms of biological role, potential calcium-dependent cell-adhesion protein. May be involved in the establishment and maintenance of specific neuronal connections in the brain. The sequence is that of Protocadherin alpha-C2 (PCDHAC2) from Pan troglodytes (Chimpanzee).